We begin with the raw amino-acid sequence, 146 residues long: Ecotin-like protein 1 (146 aa).

The protein belongs to the protease inhibitor I11 (ecotin) family.

This Leishmania infantum protein is Ecotin-like protein 1 (ISP1).